Reading from the N-terminus, the 391-residue chain is Nucleosome assembly protein 1-like 1 (391 aa).

Residues methionine 1–serine 10 show a composition bias toward basic and acidic residues. The disordered stretch occupies residues methionine 1–lysine 32. Residue alanine 2 is modified to N-acetylalanine. Position 10 is a phosphoserine (serine 10). The span at glutamate 11–glycine 28 shows a compositional bias: acidic residues. Threonine 62 and threonine 64 each carry phosphothreonine. A Phosphoserine modification is found at serine 69. The residue at position 116 (lysine 116) is an N6-acetyllysine. An NAP1L motif motif is present at residues tyrosine 125–alanine 150. Positions cysteine 132–serine 143 are enriched in acidic residues. Residues cysteine 132–aspartate 163 are disordered. Serine 143 carries the post-translational modification Phosphoserine. Over residues glutamate 144–aspartate 163 the composition is skewed to basic and acidic residues. The short motif at isoleucine 273–histidine 279 is the Nuclear localization signal element. Residues alanine 346 to aspartate 376 show a composition bias toward acidic residues. Positions alanine 346–glutamine 391 are disordered. Residues glutamate 359 and glutamate 360 each carry the 5-glutamyl polyglycine modification. Positions tyrosine 377–glutamine 391 are enriched in basic and acidic residues. Position 388 is a cysteine methyl ester (cysteine 388). Cysteine 388 is lipidated: S-farnesyl cysteine. Residues lysine 389–glutamine 391 constitute a propeptide, removed in mature form.

It belongs to the nucleosome assembly protein (NAP) family. In terms of assembly, homodimer. The dimer binds strongly and sequentially to single and double H2A-H2B heterodimers. Interacts with ERCC6; this interaction increases ERCC6 processivity. Interacts with RAD54. Interacts with SETD1A. In terms of processing, polyglycylated by TTLL10 on glutamate residues, resulting in polyglycine chains on the gamma-carboxyl group. Both polyglutamylation and polyglycylation modifications can coexist on the same protein on adjacent residues, and lowering polyglycylation levels increases polyglutamylation, and reciprocally. Post-translationally, polyglutamylated by TTLL4 on glutamate residues, resulting in polyglutamate chains on the gamma-carboxyl group. Both polyglutamylation and polyglycylation modifications can coexist on the same protein on adjacent residues, and lowering polyglycylation levels increases polyglutamylation, and reciprocally.

It is found in the nucleus. It localises to the melanosome. The protein localises to the cytoplasm. In terms of biological role, histone chaperone that plays a role in the nuclear import of H2A-H2B and nucleosome assembly. Also participates in several important DNA repair mechanisms: greatly enhances ERCC6-mediated chromatin remodeling which is essential for transcription-coupled nucleotide excision DNA repair. Also stimulates homologous recombination (HR) by RAD51 and RAD54 which is essential in mitotic DNA double strand break (DSB) repair. Plays a key role in the regulation of embryonic neurogenesis. Promotes the proliferation of neural progenitors and inhibits neuronal differentiation during cortical development. Regulates neurogenesis via the modulation of RASSF10; regulates RASSF10 expression by promoting SETD1A-mediated H3K4 methylation at the RASSF10 promoter. The polypeptide is Nucleosome assembly protein 1-like 1 (NAP1L1) (Pongo abelii (Sumatran orangutan)).